Here is a 549-residue protein sequence, read N- to C-terminus: Glucose-6-phosphate isomerase (549 aa).

Glutamate 355 (proton donor) is an active-site residue. Residues histidine 386 and lysine 514 contribute to the active site.

The protein belongs to the GPI family.

The protein resides in the cytoplasm. The enzyme catalyses alpha-D-glucose 6-phosphate = beta-D-fructose 6-phosphate. It functions in the pathway carbohydrate biosynthesis; gluconeogenesis. It participates in carbohydrate degradation; glycolysis; D-glyceraldehyde 3-phosphate and glycerone phosphate from D-glucose: step 2/4. Catalyzes the reversible isomerization of glucose-6-phosphate to fructose-6-phosphate. The chain is Glucose-6-phosphate isomerase from Buchnera aphidicola subsp. Acyrthosiphon pisum (strain APS) (Acyrthosiphon pisum symbiotic bacterium).